The chain runs to 768 residues: Gephyrin (768 aa).

Positions 14-166 (QIRVGVLTVS…LPGSKKGSQE (153 aa)) are MPT Mo-transferase. The interaction with GABARAP stretch occupies residues 153–348 (LIINLPGSKK…VDITKVARRH (196 aa)). 2 disordered regions span residues 194–245 (DELE…DSSS) and 273–316 (TASL…ASRV). Pro residues predominate over residues 200-212 (PSPPPPLSPPPTT). Residues serine 201 and serine 207 each carry the phosphoserine modification. Position 211 is a phosphothreonine (threonine 211). Position 213 is a phosphoserine (serine 213). Residue cysteine 225 is the site of S-palmitoyl cysteine attachment. A compositionally biased stretch (polar residues) spans 274–299 (ASLSTTPSESPRAQATSRLSTASCPT). Serine 275 is subject to Phosphoserine. Phosphothreonine is present on residues threonine 278 and threonine 279. Phosphoserine is present on residues serine 281 and serine 283. Cysteine 297 is lipidated: S-palmitoyl cysteine. The tract at residues 326-768 (SSKENILRAS…VVDVMVIGRL (443 aa)) is MPT adenylyltransferase. Serine 337 is modified (phosphoserine).

This sequence in the N-terminal section; belongs to the MoaB/Mog family. The protein in the C-terminal section; belongs to the MoeA family. In terms of assembly, homotrimer, homodimer and homooligomer. Interacts with SRGAP2 (via SH3 domain). Interacts with GLRB. Interacts with GABARAP. Interacts with GABRA3. GABRA3 and GLRB occupy overlapping binding sites. Interacts with ARHGAP32; IQSEC3, INSYN1 and INSYN2A. It depends on Mg(2+) as a cofactor. In terms of processing, phosphorylated. Palmitoylated. Palmitoylation is stimulated by GABA type A receptors activity. Palmitoylation by ZDHHC12 regulates clustering at synapses. Expressed in tissues including spinal cord, brain, liver, kidney and lung.

The protein resides in the postsynaptic cell membrane. It localises to the cell membrane. It is found in the cytoplasm. Its subcellular location is the cytosol. The protein localises to the cytoskeleton. The protein resides in the cell projection. It localises to the dendrite. It is found in the postsynaptic density. It carries out the reaction molybdopterin + ATP + H(+) = adenylyl-molybdopterin + diphosphate. The enzyme catalyses adenylyl-molybdopterin + molybdate = Mo-molybdopterin + AMP + H(+). It participates in cofactor biosynthesis; molybdopterin biosynthesis. Its activity is regulated as follows. Inhibited by copper and tungsten. Functionally, microtubule-associated protein involved in membrane protein-cytoskeleton interactions. It is thought to anchor the inhibitory glycine receptor (GLYR) to subsynaptic microtubules. Acts as a major instructive molecule at inhibitory synapses, where it also clusters GABA type A receptors. Its function is as follows. Also has a catalytic activity and catalyzes two steps in the biosynthesis of the molybdenum cofactor. In the first step, molybdopterin is adenylated. Subsequently, molybdate is inserted into adenylated molybdopterin and AMP is released. In Rattus norvegicus (Rat), this protein is Gephyrin (Gphn).